Consider the following 600-residue polypeptide: Adenine deaminase (600 aa).

This sequence belongs to the metallo-dependent hydrolases superfamily. Adenine deaminase family. Mn(2+) serves as cofactor.

The enzyme catalyses adenine + H2O + H(+) = hypoxanthine + NH4(+). The chain is Adenine deaminase from Roseobacter denitrificans (strain ATCC 33942 / OCh 114) (Erythrobacter sp. (strain OCh 114)).